The chain runs to 221 residues: Endonuclease segA (221 aa).

Residues 8 to 91 (KYNYTYVITN…VVNDPMTYNL (84 aa)) form the GIY-YIG domain. The tract at residues 137-164 (KKQSEETKAKRKEALLNNPYGYNRNKPS) is disordered. Residues 138 to 150 (KQSEETKAKRKEA) are compositionally biased toward basic and acidic residues.

To endonucleases of group I introns of fungi and phage. Mg(2+) serves as cofactor.

Functionally, probably involved in the movement of the endonuclease-encoding DNA. The sequence is that of Endonuclease segA (segA) from Escherichia coli (Bacteriophage T4).